The primary structure comprises 184 residues: Ribose 1,5-bisphosphate phosphokinase PhnN (184 aa).

11–18 (GPSGAGKD) is an ATP binding site.

This sequence belongs to the ribose 1,5-bisphosphokinase family.

It carries out the reaction alpha-D-ribose 1,5-bisphosphate + ATP = 5-phospho-alpha-D-ribose 1-diphosphate + ADP. It participates in metabolic intermediate biosynthesis; 5-phospho-alpha-D-ribose 1-diphosphate biosynthesis; 5-phospho-alpha-D-ribose 1-diphosphate from D-ribose 5-phosphate (route II): step 3/3. Its function is as follows. Catalyzes the phosphorylation of ribose 1,5-bisphosphate to 5-phospho-D-ribosyl alpha-1-diphosphate (PRPP). The protein is Ribose 1,5-bisphosphate phosphokinase PhnN of Burkholderia mallei (strain SAVP1).